A 299-amino-acid polypeptide reads, in one-letter code: uncharacterized protein (299 aa).

This sequence belongs to the glycosyltransferase 2 family.

This is an uncharacterized protein from Mycoplasma pneumoniae (strain ATCC 29342 / M129 / Subtype 1) (Mycoplasmoides pneumoniae).